Here is a 388-residue protein sequence, read N- to C-terminus: Basigin (388 aa).

The signal sequence occupies residues 1–21 (MAAGADVPCAVLALLVLGSLA). The Extracellular segment spans residues 27 to 323 (TAGFIKSPLS…SGSATVNLRV (297 aa)). Residues 43 to 131 (DSVELHCEAV…NHLSKSPKVK (89 aa)) form the Ig-like domain. 2 cysteine pairs are disulfide-bonded: cysteine 49–cysteine 113 and cysteine 162–cysteine 211. An Ig-like C2-type domain is found at 143–218 (ERPVITGQYS…YECIYNTNPV (76 aa)). Asparagine 163, asparagine 222, asparagine 280, asparagine 286, and asparagine 307 each carry an N-linked (GlcNAc...) asparagine glycan. The Ig-like V-type domain maps to 229–323 (PQVVAYKKSE…SGSATVNLRV (95 aa)). Cysteine 250 and cysteine 306 are joined by a disulfide. Residues 324–344 (RSRLAALWPFLGIVAEVLVLV) traverse the membrane as a helical segment. The Cytoplasmic portion of the chain corresponds to 345–388 (TIIFIYEKRRKPDEVLDDDDGGSAPLKSNATNHKDKNVRQRNAN). A disordered region spans residues 358–388 (EVLDDDDGGSAPLKSNATNHKDKNVRQRNAN).

Interacts with NXNL1, SLC2A1 and SLC16A1. Post-translationally, N-glycosylated. As to expression, retinal cone photoreceptors (at protein level). In terms of tissue distribution, brain endothelial cells, kidney epithelial cells and erythroblasts (at protein level).

It is found in the cell membrane. The protein resides in the photoreceptor inner segment. It localises to the cell projection. Its subcellular location is the cilium. The protein localises to the photoreceptor outer segment. It is found in the endoplasmic reticulum membrane. The protein resides in the basolateral cell membrane. Essential for normal retinal maturation and development. Acts as a retinal cell surface receptor for NXNL1 and plays an important role in NXNL1-mediated survival of retinal cone photoreceptors. In association with glucose transporter SLC16A1/GLUT1 and NXNL1, promotes retinal cone survival by enhancing aerobic glycolysis and accelerating the entry of glucose into photoreceptors. Functionally, signaling receptor for cyclophilins, essential for PPIA/CYPA and PPIB/CYPB-dependent signaling related to chemotaxis and adhesion of immune cells. Plays an important role in targeting the monocarboxylate transporters SLC16A1/GLUT1, SLC16A3, SLC16A8, SLC16A11 and SLC16A12 to the plasma membrane. Acts as a coreceptor for vascular endothelial growth factor receptor 2 (KDR/VEGFR2) in endothelial cells enhancing its VEGFA-mediated activation and downstream signaling. Promotes angiogenesis through EPAS1/HIF2A-mediated up-regulation of VEGFA and KDR/VEGFR2 in endothelial cells. This is Basigin (BSG) from Gallus gallus (Chicken).